We begin with the raw amino-acid sequence, 610 residues long: ATP-dependent zinc metalloprotease FtsH (610 aa).

Topologically, residues 1 to 3 (MAK) are cytoplasmic. The helical transmembrane segment at 4 to 24 (NLMLWLVIAVVLMSIFQNFSA) threads the bilayer. Over 25–97 (NNINNRKIDY…IIGAAPEEQS (73 aa)) the chain is Extracellular. The helical transmembrane segment at 98–118 (FFTAIFISWFPMLLLIGVWVF) threads the bilayer. The Cytoplasmic segment spans residues 119-610 (FMRQMQVGGG…SNICTDDDNN (492 aa)). Residue 192–199 (GPPGTGKT) coordinates ATP. Zn(2+) is bound at residue His414. The active site involves Glu415. Positions 418 and 492 each coordinate Zn(2+).

In the central section; belongs to the AAA ATPase family. It in the C-terminal section; belongs to the peptidase M41 family. Homohexamer. It depends on Zn(2+) as a cofactor.

It localises to the cell membrane. Functionally, acts as a processive, ATP-dependent zinc metallopeptidase for both cytoplasmic and membrane proteins. Plays a role in the quality control of integral membrane proteins. The sequence is that of ATP-dependent zinc metalloprotease FtsH from Buchnera aphidicola subsp. Baizongia pistaciae (strain Bp).